The chain runs to 246 residues: Transmembrane protein 41 homolog (246 aa).

6 consecutive transmembrane segments (helical) span residues 12–32 (WLVL…YSNF), 68–88 (SVVL…AIPG), 101–123 (PFYV…CYTI), 159–179 (IFLR…SPVL), 182–202 (PLAP…FLYI), and 219–239 (SWSS…PILL).

This sequence belongs to the TMEM41 family.

The protein localises to the membrane. This chain is Transmembrane protein 41 homolog (tag-175), found in Caenorhabditis elegans.